The primary structure comprises 199 residues: MGSQSSKAPRGDVTAEEAAGASPAKANGQENGHVKSNGDLTPKGEGESPPVNGTDEAAGATGDAIEPAPPSQGAEAKGDAPPKETPKKKKKFSFKKPFKLSGLSFKRNRKEGGGDSSASSPTEEEQEQGEIGACSEEGTAPEGKAAATPESQEPQAKGAEAGAACKGGDTEEEAGPPAEPSTPSGPESGPTPAGAEQNE.

The tract at residues 1–199 (MGSQSSKAPR…PTPAGAEQNE (199 aa)) is disordered. Residue Gly-2 is the site of N-myristoyl glycine attachment. The residue at position 14 (Thr-14) is a Phosphothreonine. Residues 16–26 (EEAAGASPAKA) are compositionally biased toward low complexity. Residues Ser-22, Ser-36, and Ser-48 each carry the phosphoserine modification. A compositionally biased stretch (low complexity) spans 53–64 (GTDEAAGATGDA). Ser-71 is subject to Phosphoserine. Basic and acidic residues predominate over residues 76 to 85 (AKGDAPPKET). Position 85 is a phosphothreonine (Thr-85). The span at 86–98 (PKKKKKFSFKKPF) shows a compositional bias: basic residues. Positions 87–110 (KKKKKFSFKKPFKLSGLSFKRNRK) are effector domain involved in lipid-binding and calmodulin-binding. Phosphoserine; by PKC is present on residues Ser-93, Ser-101, and Ser-104. Ser-119 bears the Phosphoserine mark. Ser-120 carries the phosphoserine; by MAPK8 modification. Ser-135 is subject to Phosphoserine. Thr-148 is modified (phosphothreonine; by MAPK8). Phosphoserine is present on Ser-151. Residues 156–167 (AKGAEAGAACKG) show a composition bias toward low complexity. The residue at position 170 (Thr-170) is a Phosphothreonine. The span at 181-199 (STPSGPESGPTPAGAEQNE) shows a compositional bias: low complexity. A Phosphothreonine; by MAPK8 modification is found at Thr-182. A Phosphothreonine modification is found at Thr-191.

Belongs to the MARCKS family. In terms of assembly, binds to filamentous actin (F-actin), but not to monomeric G-actin, independently of its phosphorylation status. Interacts with calmodulin. Phosphorylated. Phosphorylation at Ser-120 and Thr-182 is non-redundantly catalyzed by MAPK8 in vivo. Phosphorylation at Thr-148 is preferentially catalyzed by MAPK8 in vivo, but this modification can also be catalyzed by other kinases in the absence of MAPK8. May be phosphorylated by protein kinase C, which disrupts the interaction with calmodulin.

It is found in the cytoplasm. Its subcellular location is the cytoskeleton. It localises to the cell membrane. In terms of biological role, controls cell movement by regulating actin cytoskeleton homeostasis and filopodium and lamellipodium formation. When unphosphorylated, induces cell migration. When phosphorylated by MAPK8, induces actin bundles formation and stabilization, thereby reducing actin plasticity, hence restricting cell movement, including neuronal migration. May be involved in coupling the protein kinase C and calmodulin signal transduction systems. In Oryctolagus cuniculus (Rabbit), this protein is MARCKS-related protein (MARCKSL1).